We begin with the raw amino-acid sequence, 207 residues long: LexA repressor (207 aa).

The H-T-H motif DNA-binding region spans valine 33–asparagine 52. Catalysis depends on for autocatalytic cleavage activity residues serine 129 and lysine 166.

It belongs to the peptidase S24 family. Homodimer.

The enzyme catalyses Hydrolysis of Ala-|-Gly bond in repressor LexA.. Functionally, represses a number of genes involved in the response to DNA damage (SOS response), including recA and lexA. In the presence of single-stranded DNA, RecA interacts with LexA causing an autocatalytic cleavage which disrupts the DNA-binding part of LexA, leading to derepression of the SOS regulon and eventually DNA repair. This chain is LexA repressor, found in Oleidesulfovibrio alaskensis (strain ATCC BAA-1058 / DSM 17464 / G20) (Desulfovibrio alaskensis).